The primary structure comprises 274 residues: Subtilisin DY (274 aa).

A Ca(2+)-binding site is contributed by Gln2. The Peptidase S8 domain maps to 5–273 (PYGIPLIKAD…KGLINVEAAA (269 aa)). The Charge relay system role is filled by Asp32. Asp41 contacts Ca(2+). His63 serves as the catalytic Charge relay system. 6 residues coordinate Ca(2+): Leu74, Asn76, Val80, Ala168, Tyr170, and Val173. Ser220 functions as the Charge relay system in the catalytic mechanism.

The protein belongs to the peptidase S8 family. It depends on Ca(2+) as a cofactor.

The protein resides in the secreted. It carries out the reaction Hydrolysis of proteins with broad specificity for peptide bonds, and a preference for a large uncharged residue in P1. Hydrolyzes peptide amides.. In terms of biological role, subtilisin is an extracellular alkaline serine protease, it catalyzes the hydrolysis of proteins and peptide amides. The polypeptide is Subtilisin DY (apr) (Bacillus licheniformis).